Here is an 89-residue protein sequence, read N- to C-terminus: Large ribosomal subunit protein bL27 (89 aa).

The tract at residues 1–21 is disordered; it reads MAHKKSGGSSRNGRDSNPKYL.

Belongs to the bacterial ribosomal protein bL27 family.

In Hyphomonas neptunium (strain ATCC 15444), this protein is Large ribosomal subunit protein bL27.